Consider the following 446-residue polypeptide: N-succinylarginine dihydrolase (446 aa).

Substrate-binding positions include 19-28, Asn110, and 137-138; these read AGLSFGNVAS and HR. Glu174 is a catalytic residue. Substrate is bound at residue Arg213. Residue His249 is part of the active site. 2 residues coordinate substrate: Asp251 and Asn364. The Nucleophile role is filled by Cys370.

This sequence belongs to the succinylarginine dihydrolase family. In terms of assembly, homodimer.

The catalysed reaction is N(2)-succinyl-L-arginine + 2 H2O + 2 H(+) = N(2)-succinyl-L-ornithine + 2 NH4(+) + CO2. It functions in the pathway amino-acid degradation; L-arginine degradation via AST pathway; L-glutamate and succinate from L-arginine: step 2/5. Catalyzes the hydrolysis of N(2)-succinylarginine into N(2)-succinylornithine, ammonia and CO(2). The chain is N-succinylarginine dihydrolase from Burkholderia thailandensis (strain ATCC 700388 / DSM 13276 / CCUG 48851 / CIP 106301 / E264).